Consider the following 163-residue polypeptide: Single-stranded DNA-binding protein 2 (163 aa).

The region spanning 1–104 is the SSB domain; that stretch reads MINNVVLVGR…VVADNFQMLE (104 aa). The tract at residues 109–163 is disordered; that stretch reads REGGSTGSFNGGFNNNTSSSNSYSAPAQQTPNFGRDDSPFGNSNPMDISDDDLPF. The segment covering 119-130 has biased composition (low complexity); the sequence is GGFNNNTSSSNS. Polar residues predominate over residues 131-140; that stretch reads YSAPAQQTPN. An Important for interaction with partner proteins motif is present at residues 158–163; the sequence is DDDLPF.

As to quaternary structure, homotetramer.

Its function is as follows. Plays an important role in DNA replication, recombination and repair. Binds to ssDNA and to an array of partner proteins to recruit them to their sites of action during DNA metabolism. This is Single-stranded DNA-binding protein 2 (ssb2) from Streptococcus pyogenes serotype M6 (strain ATCC BAA-946 / MGAS10394).